We begin with the raw amino-acid sequence, 495 residues long: MASIRRTLSFSERHQKLVDINYCKKLHVEALQRLQNQTRDQMVQNENDDRAERKRFLRLLQDEQFELDMEEAIQKAEENKRLRELQLAQEEKLATELAKLKRESLKDEKLRQQVRENSAELRELEKKLKAAYMNKERAAQIAEKDAIKYGQMKRDAEIARTMMEEHERLIKEESAAEDKRNQAKAQYSHDLEKQLEEQGKKKQEAYEQLLKEKLMIDEIVRKIYEEDQLERQQRLEKMNTTRRYIEEFQKEQALWRKKKREEMEEENRKIIEFAKLQQQREEDRMAKVQEKVKKKRLQLKNMLTQRLEEMLRQREDLEQVRQELYQEEQAEIYKKKLEEEAEEKLRKQKELKQDFMDQMALKELILQAAKEEEETFRKAMLAKFAEDDRIELMNAQKPRMKQLEHKRAVEKLIEERRNQFLADKQRELEEWQWQQRRQGCINAIVEEERLKLLKEHATKLLGYLPKGVFKNEDDIDMLGEEFRKAYQKRSEICEK.

The segment at 1–315 is interaction with BBOF1; sequence MASIRRTLSF…RLEEMLRQRE (315 aa). 2 coiled-coil regions span residues 61–215 and 245–361; these read QDEQ…EKLM and IEEF…QMAL. The interval 172–199 is disordered; sequence EESAAEDKRNQAKAQYSHDLEKQLEEQG.

Belongs to the MNS1 family. Able to form oligomers. Microtubule inner protein component of sperm flagellar doublet microtubules. Interacts with ODAD1. Interacts with BBOF1. As to expression, expressed in trachea multiciliated cells.

The protein localises to the nucleus. Its subcellular location is the cytoplasm. It is found in the cytoskeleton. The protein resides in the cilium axoneme. It localises to the flagellum axoneme. Microtubule inner protein (MIP) part of the dynein-decorated doublet microtubules (DMTs) in cilia axoneme, which is required for motile cilia beating. May play a role in the control of meiotic division and germ cell differentiation through regulation of pairing and recombination during meiosis. Required for sperm flagella assembly. May play a role in the assembly and function of the outer dynein arm-docking complex (ODA-DC). ODA-DC mediates outer dynein arms (ODA) binding onto the axonemal doublet microtubules. The polypeptide is Meiosis-specific nuclear structural protein 1 (MNS1) (Bos taurus (Bovine)).